The following is a 573-amino-acid chain: O-fucosyltransferase 20 (573 aa).

Residues 1–60 (MALSKNSNSNSFNKKKVSYISVPSQIINSLSSSSLQSLLVSPKKSSRSTNRFSFSYRNPR) are Cytoplasmic-facing. A helical; Signal-anchor for type II membrane protein membrane pass occupies residues 61-81 (IWFFTLFLVSLFGMLKLGFNV). Over 82-573 (DPISLPFSRY…RQQQEQQSDA (492 aa)) the chain is Lumenal. N-linked (GlcNAc...) asparagine glycosylation is present at Asn-138. 344–346 (HLR) serves as a coordination point for substrate. N-linked (GlcNAc...) asparagine glycosylation is found at Asn-385 and Asn-517. The segment covering 547–556 (AGKDVTKHPV) has biased composition (basic and acidic residues). A disordered region spans residues 547–573 (AGKDVTKHPVPECMCSDRQQQEQQSDA). The segment covering 563-573 (DRQQQEQQSDA) has biased composition (polar residues).

Belongs to the glycosyltransferase GT106 family. Interacts with RACK1A. In terms of tissue distribution, highly expressed in shoot apical meristem (SAM) and in young vegetative tissues.

The protein resides in the golgi apparatus membrane. Its pathway is glycan metabolism. Functionally, may play a role in the biosynthesis of matrix polysaccharides and contribute to the biomechanics and development of the plant cell wall. The sequence is that of O-fucosyltransferase 20 from Arabidopsis thaliana (Mouse-ear cress).